A 679-amino-acid polypeptide reads, in one-letter code: DNA-directed RNA polymerase subunit beta' (679 aa).

Residues cysteine 69, cysteine 71, cysteine 84, and cysteine 87 each coordinate Zn(2+). Mg(2+) contacts are provided by aspartate 486, aspartate 488, and aspartate 490.

It belongs to the RNA polymerase beta' chain family. RpoC1 subfamily. In terms of assembly, in plastids the minimal PEP RNA polymerase catalytic core is composed of four subunits: alpha, beta, beta', and beta''. When a (nuclear-encoded) sigma factor is associated with the core the holoenzyme is formed, which can initiate transcription. It depends on Mg(2+) as a cofactor. Zn(2+) serves as cofactor.

The protein resides in the plastid. Its subcellular location is the chloroplast. The enzyme catalyses RNA(n) + a ribonucleoside 5'-triphosphate = RNA(n+1) + diphosphate. Its function is as follows. DNA-dependent RNA polymerase catalyzes the transcription of DNA into RNA using the four ribonucleoside triphosphates as substrates. The protein is DNA-directed RNA polymerase subunit beta' of Physcomitrium patens (Spreading-leaved earth moss).